Reading from the N-terminus, the 462-residue chain is Cytochrome b558/566 subunit A (462 aa).

Residues 1 to 8 (MSLKIKSK) lie on the Cytoplasmic side of the membrane. A helical membrane pass occupies residues 9–26 (ITIGVLLIIFLLSIIFTL). Residues 27–431 (ENVSLAQTSP…TSTSPVTTIS (405 aa)) lie on the Extracellular side of the membrane. Residues asparagine 28, asparagine 65, asparagine 91, asparagine 121, asparagine 144, asparagine 164, asparagine 174, asparagine 183, asparagine 211, asparagine 278, asparagine 279, asparagine 293, asparagine 316, asparagine 339, asparagine 353, and asparagine 376 are each glycosylated (N-linked (GlcNAc...) asparagine). The helical transmembrane segment at 432–456 (SAIPPVTLYVTIIGVVVALVALVIL) threads the bilayer. The Cytoplasmic portion of the chain corresponds to 457–462 (YVVFRR).

Requires heme as cofactor. Post-translationally, N-glycosylated on at least seven Asn residues by identical hexasaccharide units composed of Man, GlcNAc, Glc and 6-deoxy-6-sulfoglucose residues in the molar ration of 2:2:1:1. O-glycosylated on probably as many as 35 positions by single Man residues.

It localises to the cell membrane. In terms of biological role, monoheme cytochrome whose physiological function is not yet clear. The polypeptide is Cytochrome b558/566 subunit A (cbsA) (Sulfolobus acidocaldarius (strain ATCC 33909 / DSM 639 / JCM 8929 / NBRC 15157 / NCIMB 11770)).